The sequence spans 158 residues: Cyclic pyranopterin monophosphate synthase (158 aa).

Substrate-binding positions include 75–77 (LCH) and 113–114 (ME). Residue Asp-128 is part of the active site.

It belongs to the MoaC family. Homohexamer; trimer of dimers.

The catalysed reaction is (8S)-3',8-cyclo-7,8-dihydroguanosine 5'-triphosphate = cyclic pyranopterin phosphate + diphosphate. It participates in cofactor biosynthesis; molybdopterin biosynthesis. In terms of biological role, catalyzes the conversion of (8S)-3',8-cyclo-7,8-dihydroguanosine 5'-triphosphate to cyclic pyranopterin monophosphate (cPMP). The polypeptide is Cyclic pyranopterin monophosphate synthase (Paraburkholderia phytofirmans (strain DSM 17436 / LMG 22146 / PsJN) (Burkholderia phytofirmans)).